A 245-amino-acid polypeptide reads, in one-letter code: 1-(5-phosphoribosyl)-5-[(5-phosphoribosylamino)methylideneamino] imidazole-4-carboxamide isomerase (245 aa).

D7 functions as the Proton acceptor in the catalytic mechanism. D129 acts as the Proton donor in catalysis.

It belongs to the HisA/HisF family.

It is found in the cytoplasm. The enzyme catalyses 1-(5-phospho-beta-D-ribosyl)-5-[(5-phospho-beta-D-ribosylamino)methylideneamino]imidazole-4-carboxamide = 5-[(5-phospho-1-deoxy-D-ribulos-1-ylimino)methylamino]-1-(5-phospho-beta-D-ribosyl)imidazole-4-carboxamide. It functions in the pathway amino-acid biosynthesis; L-histidine biosynthesis; L-histidine from 5-phospho-alpha-D-ribose 1-diphosphate: step 4/9. In Shewanella frigidimarina (strain NCIMB 400), this protein is 1-(5-phosphoribosyl)-5-[(5-phosphoribosylamino)methylideneamino] imidazole-4-carboxamide isomerase.